The chain runs to 263 residues: Oxidoreductase UcpA (263 aa).

10 to 32 (LITGALQGIGEGIARTFARHGAN) contacts NAD(+). S141 contacts substrate. Residue Y155 is the Proton acceptor of the active site.

Belongs to the short-chain dehydrogenases/reductases (SDR) family.

The polypeptide is Oxidoreductase UcpA (ucpA) (Escherichia coli (strain K12)).